A 336-amino-acid chain; its full sequence is Anthranilate phosphoribosyltransferase (336 aa).

Residues Gly79, 82–83 (GD), Thr87, 89–92 (NIST), 107–115 (KHGNRAMSS), and Ser119 each bind 5-phospho-alpha-D-ribose 1-diphosphate. Gly79 is a binding site for anthranilate. Ser91 serves as a coordination point for Mg(2+). Asn110 provides a ligand contact to anthranilate. An anthranilate-binding site is contributed by Arg165. Mg(2+)-binding residues include Asp225 and Glu226.

It belongs to the anthranilate phosphoribosyltransferase family. Homodimer. Mg(2+) serves as cofactor.

It catalyses the reaction N-(5-phospho-beta-D-ribosyl)anthranilate + diphosphate = 5-phospho-alpha-D-ribose 1-diphosphate + anthranilate. It functions in the pathway amino-acid biosynthesis; L-tryptophan biosynthesis; L-tryptophan from chorismate: step 2/5. Functionally, catalyzes the transfer of the phosphoribosyl group of 5-phosphorylribose-1-pyrophosphate (PRPP) to anthranilate to yield N-(5'-phosphoribosyl)-anthranilate (PRA). This chain is Anthranilate phosphoribosyltransferase, found in Dictyoglomus turgidum (strain DSM 6724 / Z-1310).